The primary structure comprises 148 residues: [Ribosomal protein bS18]-alanine N-acetyltransferase (148 aa).

An N-acetyltransferase domain is found at 2–147 (NTISSLETTD…DAIIMALPIS (146 aa)). Position 69-71 (69-71 (IAV)) interacts with acetyl-CoA. The Proton acceptor role is filled by E103. N108 contributes to the acetyl-CoA binding site. Y115 (proton donor) is an active-site residue.

Belongs to the acetyltransferase family. RimI subfamily.

It localises to the cytoplasm. It carries out the reaction N-terminal L-alanyl-[ribosomal protein bS18] + acetyl-CoA = N-terminal N(alpha)-acetyl-L-alanyl-[ribosomal protein bS18] + CoA + H(+). Functionally, acetylates the N-terminal alanine of ribosomal protein bS18. This chain is [Ribosomal protein bS18]-alanine N-acetyltransferase, found in Escherichia coli O157:H7.